The chain runs to 154 residues: PTS system glucose-specific EIIA component (154 aa).

Residues 26-130 enclose the PTS EIIA type-1 domain; sequence DEVFKERMLG…SIKSPIIFTN (105 aa). Positions 63 and 78 each coordinate Zn(2+). Catalysis depends on His-78, which acts as the Tele-phosphohistidine intermediate; for EIIA activity. The residue at position 78 (His-78) is a Phosphohistidine; by HPr.

In terms of assembly, heterodimer with glycerol kinase (glpk). It depends on Zn(2+) as a cofactor.

The protein resides in the cytoplasm. The phosphoenolpyruvate-dependent sugar phosphotransferase system (sugar PTS), a major carbohydrate active transport system, catalyzes the phosphorylation of incoming sugar substrates concomitantly with their translocation across the cell membrane. The enzyme II complex composed of PtsG and Crr is involved in glucose transport. This Mycoplasma capricolum subsp. capricolum (strain California kid / ATCC 27343 / NCTC 10154) protein is PTS system glucose-specific EIIA component (crr).